We begin with the raw amino-acid sequence, 419 residues long: Tyrosine--tRNA ligase (419 aa).

Tyr-34 serves as a coordination point for L-tyrosine. Positions 39 to 48 match the 'HIGH' region motif; sequence PTADSLHLGN. Residues Tyr-169 and Gln-173 each coordinate L-tyrosine. A 'KMSKS' region motif is present at residues 229–233; sequence KFGKS. ATP is bound at residue Lys-232. The 67-residue stretch at 353 to 419 folds into the S4 RNA-binding domain; sequence LTLVELLISA…GKKKNFVLTY (67 aa).

It belongs to the class-I aminoacyl-tRNA synthetase family. TyrS type 1 subfamily. In terms of assembly, homodimer.

Its subcellular location is the cytoplasm. The catalysed reaction is tRNA(Tyr) + L-tyrosine + ATP = L-tyrosyl-tRNA(Tyr) + AMP + diphosphate + H(+). Catalyzes the attachment of tyrosine to tRNA(Tyr) in a two-step reaction: tyrosine is first activated by ATP to form Tyr-AMP and then transferred to the acceptor end of tRNA(Tyr). This Lactococcus lactis subsp. lactis (strain IL1403) (Streptococcus lactis) protein is Tyrosine--tRNA ligase.